A 488-amino-acid chain; its full sequence is UDP-N-acetylmuramoyl-L-alanyl-D-glutamate--2,6-diaminopimelate ligase (488 aa).

UDP-N-acetyl-alpha-D-muramoyl-L-alanyl-D-glutamate is bound by residues leucine 24, serine 26, and 41–43 (HQV). Residue 113 to 119 (GTNGKTT) coordinates ATP. Residues asparagine 154, 155-156 (TT), serine 182, glutamine 188, and arginine 190 contribute to the UDP-N-acetyl-alpha-D-muramoyl-L-alanyl-D-glutamate site. Residue lysine 222 is modified to N6-carboxylysine. Residues arginine 386, 410 to 413 (DNPR), glycine 461, and glutamate 465 each bind meso-2,6-diaminopimelate. Residues 410–413 (DNPR) carry the Meso-diaminopimelate recognition motif motif.

The protein belongs to the MurCDEF family. MurE subfamily. Mg(2+) serves as cofactor. Carboxylation is probably crucial for Mg(2+) binding and, consequently, for the gamma-phosphate positioning of ATP.

It is found in the cytoplasm. It carries out the reaction UDP-N-acetyl-alpha-D-muramoyl-L-alanyl-D-glutamate + meso-2,6-diaminopimelate + ATP = UDP-N-acetyl-alpha-D-muramoyl-L-alanyl-gamma-D-glutamyl-meso-2,6-diaminopimelate + ADP + phosphate + H(+). Its pathway is cell wall biogenesis; peptidoglycan biosynthesis. Functionally, catalyzes the addition of meso-diaminopimelic acid to the nucleotide precursor UDP-N-acetylmuramoyl-L-alanyl-D-glutamate (UMAG) in the biosynthesis of bacterial cell-wall peptidoglycan. This chain is UDP-N-acetylmuramoyl-L-alanyl-D-glutamate--2,6-diaminopimelate ligase, found in Haemophilus influenzae (strain PittEE).